Consider the following 475-residue polypeptide: Adenosylhomocysteinase (475 aa).

Thr60, Asp133, and Glu198 together coordinate substrate. 199 to 201 (TTT) contacts NAD(+). Residues Lys228 and Asp232 each contribute to the substrate site. NAD(+) is bound by residues Asn233, 262–267 (GYGDVG), Glu285, Asn320, 341–343 (IGH), and Asn389.

Belongs to the adenosylhomocysteinase family. Requires NAD(+) as cofactor.

It is found in the cytoplasm. It catalyses the reaction S-adenosyl-L-homocysteine + H2O = L-homocysteine + adenosine. It functions in the pathway amino-acid biosynthesis; L-homocysteine biosynthesis; L-homocysteine from S-adenosyl-L-homocysteine: step 1/1. Functionally, may play a key role in the regulation of the intracellular concentration of adenosylhomocysteine. In Syntrophotalea carbinolica (strain DSM 2380 / NBRC 103641 / GraBd1) (Pelobacter carbinolicus), this protein is Adenosylhomocysteinase.